A 261-amino-acid chain; its full sequence is Acyl-[acyl-carrier-protein]--UDP-N-acetylglucosamine O-acyltransferase (261 aa).

Belongs to the transferase hexapeptide repeat family. LpxA subfamily. In terms of assembly, homotrimer.

The protein localises to the cytoplasm. It carries out the reaction a (3R)-hydroxyacyl-[ACP] + UDP-N-acetyl-alpha-D-glucosamine = a UDP-3-O-[(3R)-3-hydroxyacyl]-N-acetyl-alpha-D-glucosamine + holo-[ACP]. It participates in glycolipid biosynthesis; lipid IV(A) biosynthesis; lipid IV(A) from (3R)-3-hydroxytetradecanoyl-[acyl-carrier-protein] and UDP-N-acetyl-alpha-D-glucosamine: step 1/6. Its function is as follows. Involved in the biosynthesis of lipid A, a phosphorylated glycolipid that anchors the lipopolysaccharide to the outer membrane of the cell. The polypeptide is Acyl-[acyl-carrier-protein]--UDP-N-acetylglucosamine O-acyltransferase (Trichlorobacter lovleyi (strain ATCC BAA-1151 / DSM 17278 / SZ) (Geobacter lovleyi)).